We begin with the raw amino-acid sequence, 264 residues long: Probable membrane transporter protein HI_0902 (264 aa).

A run of 9 helical transmembrane segments spans residues 4-24 (FILLCLLVGALAGFLAGLFGI), 28-48 (LVIVPTLVYLLPIVDVPESLL), 49-69 (MSTALGTSFATIVITGIGSAQ), 81-101 (AVRILAPVIMLSVFICGLFIG), 107-127 (ISAKIFACLVVYLATKMVLSI), 147-167 (ILIGMASSAAGIGGGGFIVPF), 183-203 (AFCGMLLGISGMFSFIVSGWG), 210-230 (YSLGYIYLPAVLGITATSFFT), and 243-263 (VSTLKKGFALFLIVVAINMFL).

The protein belongs to the 4-toluene sulfonate uptake permease (TSUP) (TC 2.A.102) family.

It is found in the cell membrane. This is Probable membrane transporter protein HI_0902 from Haemophilus influenzae (strain ATCC 51907 / DSM 11121 / KW20 / Rd).